A 289-amino-acid polypeptide reads, in one-letter code: 4-hydroxy-3-methylbut-2-enyl diphosphate reductase (289 aa).

Residue C13 participates in [4Fe-4S] cluster binding. (2E)-4-hydroxy-3-methylbut-2-enyl diphosphate is bound by residues H41 and H75. The dimethylallyl diphosphate site is built by H41 and H75. Residues H41 and H75 each coordinate isopentenyl diphosphate. Residue C97 participates in [4Fe-4S] cluster binding. Residue H129 coordinates (2E)-4-hydroxy-3-methylbut-2-enyl diphosphate. H129 is a binding site for dimethylallyl diphosphate. An isopentenyl diphosphate-binding site is contributed by H129. Residue E131 is the Proton donor of the active site. (2E)-4-hydroxy-3-methylbut-2-enyl diphosphate is bound at residue T167. C198 is a binding site for [4Fe-4S] cluster. 4 residues coordinate (2E)-4-hydroxy-3-methylbut-2-enyl diphosphate: S226, S227, N228, and S270. Residues S226, S227, N228, and S270 each contribute to the dimethylallyl diphosphate site. Isopentenyl diphosphate contacts are provided by S226, S227, N228, and S270.

This sequence belongs to the IspH family. The cofactor is [4Fe-4S] cluster.

The enzyme catalyses isopentenyl diphosphate + 2 oxidized [2Fe-2S]-[ferredoxin] + H2O = (2E)-4-hydroxy-3-methylbut-2-enyl diphosphate + 2 reduced [2Fe-2S]-[ferredoxin] + 2 H(+). It carries out the reaction dimethylallyl diphosphate + 2 oxidized [2Fe-2S]-[ferredoxin] + H2O = (2E)-4-hydroxy-3-methylbut-2-enyl diphosphate + 2 reduced [2Fe-2S]-[ferredoxin] + 2 H(+). Its pathway is isoprenoid biosynthesis; dimethylallyl diphosphate biosynthesis; dimethylallyl diphosphate from (2E)-4-hydroxy-3-methylbutenyl diphosphate: step 1/1. It participates in isoprenoid biosynthesis; isopentenyl diphosphate biosynthesis via DXP pathway; isopentenyl diphosphate from 1-deoxy-D-xylulose 5-phosphate: step 6/6. Functionally, catalyzes the conversion of 1-hydroxy-2-methyl-2-(E)-butenyl 4-diphosphate (HMBPP) into a mixture of isopentenyl diphosphate (IPP) and dimethylallyl diphosphate (DMAPP). Acts in the terminal step of the DOXP/MEP pathway for isoprenoid precursor biosynthesis. The chain is 4-hydroxy-3-methylbut-2-enyl diphosphate reductase from Bacteroides thetaiotaomicron (strain ATCC 29148 / DSM 2079 / JCM 5827 / CCUG 10774 / NCTC 10582 / VPI-5482 / E50).